Here is a 293-residue protein sequence, read N- to C-terminus: Bifunctional protein FolD (293 aa).

Residues 165–167 (GRS), serine 190, and isoleucine 231 contribute to the NADP(+) site.

This sequence belongs to the tetrahydrofolate dehydrogenase/cyclohydrolase family. In terms of assembly, homodimer.

The enzyme catalyses (6R)-5,10-methylene-5,6,7,8-tetrahydrofolate + NADP(+) = (6R)-5,10-methenyltetrahydrofolate + NADPH. The catalysed reaction is (6R)-5,10-methenyltetrahydrofolate + H2O = (6R)-10-formyltetrahydrofolate + H(+). Its pathway is one-carbon metabolism; tetrahydrofolate interconversion. In terms of biological role, catalyzes the oxidation of 5,10-methylenetetrahydrofolate to 5,10-methenyltetrahydrofolate and then the hydrolysis of 5,10-methenyltetrahydrofolate to 10-formyltetrahydrofolate. This is Bifunctional protein FolD from Synechococcus sp. (strain CC9902).